The primary structure comprises 537 residues: Exodeoxyribonuclease 7 large subunit (537 aa).

The disordered stretch occupies residues 508-537 (GEGAPVEPPQAARPSKGARTKAAQPSLFDD).

It belongs to the XseA family. As to quaternary structure, heterooligomer composed of large and small subunits.

It localises to the cytoplasm. The catalysed reaction is Exonucleolytic cleavage in either 5'- to 3'- or 3'- to 5'-direction to yield nucleoside 5'-phosphates.. Its function is as follows. Bidirectionally degrades single-stranded DNA into large acid-insoluble oligonucleotides, which are then degraded further into small acid-soluble oligonucleotides. The sequence is that of Exodeoxyribonuclease 7 large subunit from Azorhizobium caulinodans (strain ATCC 43989 / DSM 5975 / JCM 20966 / LMG 6465 / NBRC 14845 / NCIMB 13405 / ORS 571).